The following is a 90-amino-acid chain: Bombyxin B-6 (90 aa).

The N-terminal stretch at 1-20 (MMKTSVMFMLVVVISLMCSS) is a signal peptide. 3 cysteine pairs are disulfide-bonded: C30–C76, C42–C89, and C75–C80. The propeptide at 49 to 67 (GVAQYAPYFWTRQYLGSRG) is c peptide like.

This sequence belongs to the insulin family. As to quaternary structure, heterodimer of a B chain and an A chain linked by two disulfide bonds.

Its subcellular location is the secreted. Functionally, brain peptide responsible for activation of prothoracic glands to produce ecdysone in insects. The protein is Bombyxin B-6 (BBXB6) of Bombyx mori (Silk moth).